The sequence spans 249 residues: Aspartate/glutamate leucyltransferase (249 aa).

It belongs to the R-transferase family. Bpt subfamily.

The protein localises to the cytoplasm. It catalyses the reaction N-terminal L-glutamyl-[protein] + L-leucyl-tRNA(Leu) = N-terminal L-leucyl-L-glutamyl-[protein] + tRNA(Leu) + H(+). It carries out the reaction N-terminal L-aspartyl-[protein] + L-leucyl-tRNA(Leu) = N-terminal L-leucyl-L-aspartyl-[protein] + tRNA(Leu) + H(+). In terms of biological role, functions in the N-end rule pathway of protein degradation where it conjugates Leu from its aminoacyl-tRNA to the N-termini of proteins containing an N-terminal aspartate or glutamate. This chain is Aspartate/glutamate leucyltransferase, found in Xanthobacter autotrophicus (strain ATCC BAA-1158 / Py2).